Here is a 303-residue protein sequence, read N- to C-terminus: MSSARFDSSDRSAWYMGPVTRQEAQTRLQGQRHGMFLVRDSSTCPGDYVLSVSENSRVSHYIINSLPNRRFKIGDQEFDHLPALLEFYKIHYLDTTTLIEPAPRYPSPPVGSVSAPNLPTAEENLEYVRTLYDFPGNDAEDLPFKKGELLVIIEKPEEQWWSARNKDGRVGMIPVPYVEKLVRSSPHGKHGNRNSNSYGIPEPAHAYAQPQTTTPLPTVASTPGAAINPLPSTQNGPVFAKAIQKRVPCAYDKTALALEVGDIVKVTRMNINGQWEGEVNGRKGLFPFTHVKIFDPQNPDDNE.

The region spanning 14–102 is the SH2 domain; sequence WYMGPVTRQE…LDTTTLIEPA (89 aa). One can recognise an SH3 1 domain in the interval 123–183; that stretch reads ENLEYVRTLY…PVPYVEKLVR (61 aa). Tyr-127 bears the Phosphotyrosine mark. The tract at residues 184–203 is disordered; the sequence is SSPHGKHGNRNSNSYGIPEP. Tyr-207 is modified (phosphotyrosine). The 62-residue stretch at 235–296 folds into the SH3 2 domain; that stretch reads NGPVFAKAIQ…PFTHVKIFDP (62 aa).

Belongs to the CRK family. As to quaternary structure, interacts with DOCK2 and EPOR. Interacts with phosphorylated CBLB and IRS4. Interacts with INPP5D/SHIP1. Interacts with BCAR1/CAS and NEDD9/HEF1. Post-translationally, phosphorylated on tyrosine. Phosphorylation is prominent during early development, but decreases at later embryonic stages and in newborn mice.

May mediate the transduction of intracellular signals. This is Crk-like protein (Crkl) from Mus musculus (Mouse).